Reading from the N-terminus, the 377-residue chain is tRNA(Met) cytidine acetate ligase (377 aa).

ATP-binding positions include 7–20 (ITEY…HLFH), glycine 100, asparagine 153, and arginine 178.

This sequence belongs to the TmcAL family.

The protein localises to the cytoplasm. It catalyses the reaction cytidine(34) in elongator tRNA(Met) + acetate + ATP = N(4)-acetylcytidine(34) in elongator tRNA(Met) + AMP + diphosphate. Functionally, catalyzes the formation of N(4)-acetylcytidine (ac(4)C) at the wobble position of elongator tRNA(Met), using acetate and ATP as substrates. First activates an acetate ion to form acetyladenylate (Ac-AMP) and then transfers the acetyl group to tRNA to form ac(4)C34. The protein is tRNA(Met) cytidine acetate ligase of Staphylococcus epidermidis (strain ATCC 35984 / DSM 28319 / BCRC 17069 / CCUG 31568 / BM 3577 / RP62A).